The following is a 385-amino-acid chain: Queuine tRNA-ribosyltransferase (385 aa).

The Proton acceptor role is filled by D92. Substrate contacts are provided by residues 92–96, D146, Q188, and G215; that span reads DSGGF. Residues 246 to 252 form an RNA binding region; the sequence is GVGHPED. The active-site Nucleophile is the D265. Positions 270 to 274 are RNA binding; important for wobble base 34 recognition; sequence TRTGR. Residues C303, C305, C308, and H334 each contribute to the Zn(2+) site.

It belongs to the queuine tRNA-ribosyltransferase family. As to quaternary structure, homodimer. Within each dimer, one monomer is responsible for RNA recognition and catalysis, while the other monomer binds to the replacement base PreQ1. Zn(2+) is required as a cofactor.

It catalyses the reaction 7-aminomethyl-7-carbaguanine + guanosine(34) in tRNA = 7-aminomethyl-7-carbaguanosine(34) in tRNA + guanine. Its pathway is tRNA modification; tRNA-queuosine biosynthesis. Catalyzes the base-exchange of a guanine (G) residue with the queuine precursor 7-aminomethyl-7-deazaguanine (PreQ1) at position 34 (anticodon wobble position) in tRNAs with GU(N) anticodons (tRNA-Asp, -Asn, -His and -Tyr). Catalysis occurs through a double-displacement mechanism. The nucleophile active site attacks the C1' of nucleotide 34 to detach the guanine base from the RNA, forming a covalent enzyme-RNA intermediate. The proton acceptor active site deprotonates the incoming PreQ1, allowing a nucleophilic attack on the C1' of the ribose to form the product. After dissociation, two additional enzymatic reactions on the tRNA convert PreQ1 to queuine (Q), resulting in the hypermodified nucleoside queuosine (7-(((4,5-cis-dihydroxy-2-cyclopenten-1-yl)amino)methyl)-7-deazaguanosine). This chain is Queuine tRNA-ribosyltransferase, found in Thermus thermophilus (strain ATCC BAA-163 / DSM 7039 / HB27).